Here is a 438-residue protein sequence, read N- to C-terminus: Na(+)/H(+) antiporter NhaA (438 aa).

Helical transmembrane passes span 23–43 (FGGIFLFLNAVLAMVVANSFL), 62–82 (FFIGFSLHNWIDDVLMALFFL), 104–124 (SFPVIAAIGGMIAPGLIYFFL), 133–153 (GFGIPMATDIAFALGVIMLLG), 162–182 (VFLITLAVADDLGAIVVIALF), 185–205 (TNLKFAWLLGALGVVLILAVL), 221–241 (VLLWFCVHQSGIHATIAAVIL), 302–322 (FLAPISGYFIMPLFAFANAGV), 337–357 (LGVILGLCLGKPLGIFLITFI), 372–392 (WWHILGAGLLAGIGFTMSMFI), and 410–430 (IAILLGSLISGIIGALYLFAL).

The protein belongs to the NhaA Na(+)/H(+) (TC 2.A.33) antiporter family.

The protein resides in the cell inner membrane. It catalyses the reaction Na(+)(in) + 2 H(+)(out) = Na(+)(out) + 2 H(+)(in). Na(+)/H(+) antiporter that extrudes sodium in exchange for external protons. In Helicobacter pylori (strain HPAG1), this protein is Na(+)/H(+) antiporter NhaA.